Consider the following 633-residue polypeptide: Kelch-like protein diablo (633 aa).

The segment at 1–62 is disordered; sequence MGDLPGSTGG…ARLSHTSEKH (62 aa). Gly residues predominate over residues 7-25; that stretch reads STGGGGGVGGGGNGGGGPT. The span at 26–45 shows a compositional bias: low complexity; that stretch reads IAGTNGNSTTGPGSSTGSTG. In terms of domain architecture, BTB spans 80 to 147; sequence CDVVLNVGGR…CYTAHIIVEE (68 aa). Positions 182 to 284 constitute a BACK domain; the sequence is CLGIRAFADT…SPKFLVGTVG (103 aa). Kelch repeat units lie at residues 331-377, 379-425, 426-472, 474-519, 521-566, and 567-613; these read VLFA…VLND, LYAV…VLDG, FLYA…VLGG, LYAI…VFNN, IYAV…VVNG, and QLYA…VMRA.

It participates in protein modification; protein ubiquitination. Functionally, probable substrate-specific adapter of an E3 ubiquitin-protein ligase complex which mediates the ubiquitination and subsequent proteasomal degradation of target proteins. May have a role in synapse differentiation and growth. This Drosophila ananassae (Fruit fly) protein is Kelch-like protein diablo.